A 214-amino-acid chain; its full sequence is Probable maleylacetoacetate isomerase (214 aa).

The 81-residue stretch at 4-84 folds into the GST N-terminal domain; sequence QKPVLYSYWR…YLEETHPDVP (81 aa). Residues 14–19, V56, 68–69, Q108, and 112–114 each bind glutathione; these read SSCSWR, ES, and NLK. The 124-residue stretch at 89-212 folds into the GST C-terminal domain; sequence DPIKRAHARA…HPDNQPDTGL (124 aa).

Belongs to the GST superfamily. Zeta family. Requires glutathione as cofactor.

It is found in the cytoplasm. It catalyses the reaction 4-maleylacetoacetate = 4-fumarylacetoacetate. It functions in the pathway amino-acid degradation; L-phenylalanine degradation; acetoacetate and fumarate from L-phenylalanine: step 5/6. The chain is Probable maleylacetoacetate isomerase (gst-42) from Caenorhabditis elegans.